A 248-amino-acid chain; its full sequence is Phycocyanobilin:ferredoxin oxidoreductase (248 aa).

This sequence belongs to the HY2 family.

The enzyme catalyses (2R,3Z)-phycocyanobilin + 4 oxidized [2Fe-2S]-[ferredoxin] = biliverdin IXalpha + 4 reduced [2Fe-2S]-[ferredoxin] + 4 H(+). Functionally, catalyzes the four-electron reduction of biliverdin IX-alpha (2-electron reduction at both the A and D rings); the reaction proceeds via an isolatable 2-electron intermediate, 181,182-dihydrobiliverdin. In Synechococcus elongatus (strain ATCC 33912 / PCC 7942 / FACHB-805) (Anacystis nidulans R2), this protein is Phycocyanobilin:ferredoxin oxidoreductase (pcyA).